The sequence spans 161 residues: 6,7-dimethyl-8-ribityllumazine synthase (161 aa).

5-amino-6-(D-ribitylamino)uracil is bound by residues tryptophan 31, serine 63–glutamate 65, and valine 85–isoleucine 87. Glycine 90–threonine 91 contributes to the (2S)-2-hydroxy-3-oxobutyl phosphate binding site. Residue histidine 93 is the Proton donor of the active site. Phenylalanine 118 contacts 5-amino-6-(D-ribitylamino)uracil. Arginine 132 is a (2S)-2-hydroxy-3-oxobutyl phosphate binding site.

Belongs to the DMRL synthase family.

The enzyme catalyses (2S)-2-hydroxy-3-oxobutyl phosphate + 5-amino-6-(D-ribitylamino)uracil = 6,7-dimethyl-8-(1-D-ribityl)lumazine + phosphate + 2 H2O + H(+). Its pathway is cofactor biosynthesis; riboflavin biosynthesis; riboflavin from 2-hydroxy-3-oxobutyl phosphate and 5-amino-6-(D-ribitylamino)uracil: step 1/2. Functionally, catalyzes the formation of 6,7-dimethyl-8-ribityllumazine by condensation of 5-amino-6-(D-ribitylamino)uracil with 3,4-dihydroxy-2-butanone 4-phosphate. This is the penultimate step in the biosynthesis of riboflavin. This is 6,7-dimethyl-8-ribityllumazine synthase from Paenarthrobacter aurescens (strain TC1).